The primary structure comprises 239 residues: Large ribosomal subunit protein uL2 (239 aa).

Disordered regions lie at residues 1–20 (MGHRIKTQNRGRGGPTYRAP) and 202–239 (FGGGGHQHTGRPKTVSRGTSPGRKVGSVAARRTGRRKR).

The protein belongs to the universal ribosomal protein uL2 family. In terms of assembly, part of the 50S ribosomal subunit. Forms a bridge to the 30S subunit in the 70S ribosome.

In terms of biological role, one of the primary rRNA binding proteins. Required for association of the 30S and 50S subunits to form the 70S ribosome, for tRNA binding and peptide bond formation. It has been suggested to have peptidyltransferase activity; this is somewhat controversial. Makes several contacts with the 16S rRNA in the 70S ribosome. The polypeptide is Large ribosomal subunit protein uL2 (Methanosphaerula palustris (strain ATCC BAA-1556 / DSM 19958 / E1-9c)).